Here is a 196-residue protein sequence, read N- to C-terminus: Rho-related protein racA (196 aa).

GTP contacts are provided by alanine 13, glycine 15, lysine 16, threonine 17, cysteine 18, tyrosine 32, threonine 35, glycine 60, lysine 116, aspartate 118, and alanine 159. A Mg(2+)-binding site is contributed by threonine 17. 2 consecutive short sequence motifs (switch) follow at residues 26-37 and 57-75; these read NAFPNEYIPTVF and DTAG…YPQT. Threonine 35 is a Mg(2+) binding site. A Cysteine methyl ester modification is found at cysteine 193. Cysteine 193 carries the S-geranylgeranyl cysteine lipid modification. The propeptide at 194–196 is removed in mature form; sequence LLF.

This sequence belongs to the small GTPase superfamily. Rho family. Interacts (GTP-bound form) with PAK2 (via CRIB domain). Requires Mg(2+) as cofactor.

The protein resides in the cell membrane. The protein localises to the cytoplasm. It localises to the cytoskeleton. It catalyses the reaction GTP + H2O = GDP + phosphate + H(+). Regulated by guanine nucleotide exchange factors (GEFs) which promote the exchange of bound GDP for free GTP, GTPase activating proteins (GAPs) which increase the GTP hydrolysis activity, and GDP dissociation inhibitors which inhibit the dissociation of the nucleotide from the GTPase. Functionally, small GTPase which cycles between active GTP-bound and inactive GDP-bound states. Involved in cytoskeleton remodeling. Plays a role in phagocytosis of bacteria and host erythrocytes. Involved in capping of surface receptors. May be involved in cytokinesis. This is Rho-related protein racA from Entamoeba histolytica (strain ATCC 30459 / HM-1:IMSS / ABRM).